Reading from the N-terminus, the 387-residue chain is Phosphoglycerate kinase (387 aa).

Residues 21 to 23 (DLN), R36, and 59 to 62 (HLGR) contribute to the substrate site. Position 84 is an N6-acetyllysine (K84). Positions 113 and 146 each coordinate substrate. ATP contacts are provided by residues K197, E314, and 340–343 (GGDT).

Belongs to the phosphoglycerate kinase family. In terms of assembly, monomer.

It localises to the cytoplasm. The enzyme catalyses (2R)-3-phosphoglycerate + ATP = (2R)-3-phospho-glyceroyl phosphate + ADP. Its pathway is carbohydrate degradation; glycolysis; pyruvate from D-glyceraldehyde 3-phosphate: step 2/5. In Shigella sonnei (strain Ss046), this protein is Phosphoglycerate kinase.